The primary structure comprises 328 residues: Organic solute transporter alpha-like protein (328 aa).

The Extracellular segment spans residues 1–44 (MNASENYFTMDPTENISQVLDQNRNNTNSLRTHPTVEEYYENMT). N2, N15, N25, and N42 each carry an N-linked (GlcNAc...) asparagine glycan. The helical transmembrane segment at 45-65 (AFLSLAIFIASLLTILNISIF) threads the bilayer. At 66-84 (ATTVSRLRRHLDKPLLGPS) the chain is on the cytoplasmic side. Residues 85–105 (IMMVGLYPIISVAALVTILVP) traverse the membrane as a helical segment. A topological domain (extracellular) is located at residue Y106. A helical transmembrane segment spans residues 107–127 (SWFICHTVMHVMFMVGGPVFR). Residues 128-177 (TLLFRYVGSEQNYVKETAGEAVQLNTPPCCCCCLCLPMVIPTKAKLCISR) lie on the Cytoplasmic side of the membrane. Residues 178 to 198 (YMVWQMPFWQGSIMLVMNILY) form a helical membrane-spanning segment. At 199 to 208 (YRDIQLYRQV) the chain is on the extracellular side. Residues 209–229 (MFFFIPFIVCSIVLGAWSLQI) form a helical membrane-spanning segment. Residues 230–247 (TVRMITKVRGDYQLRKKM) are Cytoplasmic-facing. A helical transmembrane segment spans residues 248–265 (FCLQLVVMLCKLQYLVLY). The Extracellular portion of the chain corresponds to 266–287 (DQLDGIKMGGEYPINHTVYKQT). N-linked (GlcNAc...) asparagine glycosylation is present at N280. Residues 288-308 (IINILILVEMVLVSMMVQSAY) traverse the membrane as a helical segment. Topologically, residues 309 to 328 (RTPVQVQIDEVNKEKEVTRI) are cytoplasmic.

It belongs to the OST-alpha family.

It is found in the cell membrane. Its function is as follows. Probable transporter. The sequence is that of Organic solute transporter alpha-like protein from Drosophila melanogaster (Fruit fly).